The primary structure comprises 339 residues: Ubiquitin carboxyl-terminal hydrolase 50 (339 aa).

A USP domain is found at 44-339 (TGLWNLGNTC…AFCKNSVTQA (296 aa)). Residue C53 is the Nucleophile of the active site. Catalysis depends on H327, which acts as the Proton acceptor.

The protein belongs to the peptidase C19 family. Weakly expressed in a few tissues.

The protein resides in the cytoplasm. It localises to the cytoskeleton. Its subcellular location is the microtubule organizing center. The protein localises to the centrosome. It is found in the nucleus. The catalysed reaction is Thiol-dependent hydrolysis of ester, thioester, amide, peptide and isopeptide bonds formed by the C-terminal Gly of ubiquitin (a 76-residue protein attached to proteins as an intracellular targeting signal).. In terms of biological role, deubiquitinating enzyme that removes conjugated ubiquitin from specific proteins to regulate different cellular processes. Regulates the inflammasome signaling pathway by deubiquitinating 'Lys-63'-linked polyubiquitination of the PYCARD/ASC adapter protein. Regulates the ubiquitination and stability of the ACE2 protein. Acts as a negative regulator of the G2/M checkpoint pathway, by preventing serine/threonine kinase WEE1 degradation, thereby repressing entry into mitosis following activation of the G2/M DNA damage checkpoint. This chain is Ubiquitin carboxyl-terminal hydrolase 50, found in Homo sapiens (Human).